Reading from the N-terminus, the 141-residue chain is Fluoride-specific ion channel FluC 1 (141 aa).

A run of 4 helical transmembrane segments spans residues 12 to 32 (LYAL…LVGV), 44 to 64 (WATL…AAIA), 79 to 99 (FVMT…LETF), and 107 to 127 (ALAA…AVWL). Residues G86 and T89 each contribute to the Na(+) site.

The protein belongs to the fluoride channel Fluc/FEX (TC 1.A.43) family.

It localises to the cell inner membrane. The enzyme catalyses fluoride(in) = fluoride(out). With respect to regulation, na(+) is not transported, but it plays an essential structural role and its presence is essential for fluoride channel function. In terms of biological role, fluoride-specific ion channel. Important for reducing fluoride concentration in the cell, thus reducing its toxicity. The polypeptide is Fluoride-specific ion channel FluC 1 (Rhodopseudomonas palustris (strain BisB18)).